Reading from the N-terminus, the 215-residue chain is Oligoribonuclease (215 aa).

Residues 5–170 (LVWIDCEMTG…ADIHESIREL (166 aa)) form the Exonuclease domain. The active site involves Y127.

The protein belongs to the oligoribonuclease family.

The protein resides in the cytoplasm. Functionally, 3'-to-5' exoribonuclease specific for small oligoribonucleotides. The sequence is that of Oligoribonuclease from Mycobacterium ulcerans (strain Agy99).